The chain runs to 146 residues: Large ribosomal subunit protein bL9 (146 aa).

Belongs to the bacterial ribosomal protein bL9 family. Part of the 50S ribosomal subunit. Contacts protein L31.

Binds to the 23S rRNA and protein L31. This chain is Large ribosomal subunit protein bL9 (rplI), found in Deinococcus radiodurans (strain ATCC 13939 / DSM 20539 / JCM 16871 / CCUG 27074 / LMG 4051 / NBRC 15346 / NCIMB 9279 / VKM B-1422 / R1).